A 29-amino-acid chain; its full sequence is Cyclotide mela-2 (29 aa).

Residues G1–D29 constitute a cross-link (cyclopeptide (Gly-Asp)). 3 cysteine pairs are disulfide-bonded: C5–C19, C9–C21, and C14–C26.

In terms of processing, this is a cyclic peptide. Post-translationally, contains 3 disulfide bonds.

Probably participates in a plant defense mechanism (Potential). Binds to and induces leakage in phospholipd membranes, particularly ones containing 1-palmitoyl-2-oleophosphatidylethanolamine (POPE). In vitro, displays cytotoxicity against cultured cells but no hemolytic activity towards fresh erythrocytes. Not active against Gram-negative bacterium E.coli ATCC 25922 or Gram-positive bacterium S.aureus ATCC 25923 up to a concentration of 64 uM. The chain is Cyclotide mela-2 from Melicytus latifolius (Norfolk Island mahoe).